A 120-amino-acid polypeptide reads, in one-letter code: Large ribosomal subunit protein uL22 (120 aa).

Belongs to the universal ribosomal protein uL22 family. In terms of assembly, part of the 50S ribosomal subunit.

In terms of biological role, this protein binds specifically to 23S rRNA; its binding is stimulated by other ribosomal proteins, e.g. L4, L17, and L20. It is important during the early stages of 50S assembly. It makes multiple contacts with different domains of the 23S rRNA in the assembled 50S subunit and ribosome. The globular domain of the protein is located near the polypeptide exit tunnel on the outside of the subunit, while an extended beta-hairpin is found that lines the wall of the exit tunnel in the center of the 70S ribosome. The polypeptide is Large ribosomal subunit protein uL22 (Corynebacterium glutamicum (strain R)).